Consider the following 637-residue polypeptide: GTPase-activating protein GYP1 (637 aa).

The span at 1–17 shows a compositional bias: basic and acidic residues; the sequence is MGVRSAAKEMHERDHNS. 2 disordered regions span residues 1-152 and 187-233; these read MGVR…GDRY and RTLS…NDSK. Over residues 18 to 27 the composition is skewed to polar residues; it reads DSSSLVTSLM. Residues 28–45 show a composition bias toward low complexity; sequence KSWRISSASSSKKPSLYK. The span at 46–59 shows a compositional bias: polar residues; that stretch reads MNTTESTSLPSGYA. Ser-69 is modified (phosphoserine). Composition is skewed to polar residues over residues 79-91 and 98-107; these read QQASTRRTSNSYS and PTLSTASNES. Residues 115 to 127 show a composition bias toward basic residues; that stretch reads RQHHQRHHHHQQP. 2 stretches are compositionally biased toward low complexity: residues 128 to 142 and 187 to 207; these read RHSSSGSVGNNCSNS and RTLSRKSTSSSINSISNMGTS. The segment covering 208–223 has biased composition (polar residues); that stretch reads AVRNSSSSFTYPQLPQ. The residue at position 250 (Ser-250) is a Phosphoserine. The 229-residue stretch at 280 to 508 folds into the Rab-GAP TBC domain; that stretch reads GIPKIHRPVV…RMWDTYLSET (229 aa). The interval 543 to 564 is disordered; the sequence is DFQSPTTALSNMTPNNAVEDSG.

The protein resides in the golgi apparatus. The protein localises to the golgi stack. Functionally, GTPase-activating protein (GAP) that stimulates specifically the intrinsic GTPase activity of Ypt/Rab-type GTPases YPT1 and YPT7. Functions on the Golgi as a negative regulator of YPT1. Functions on the vacuole as a negative regulator of YPT7. It is also active on SEC4 and YPT51. Provides a catalytic arginine (arginine finger) and glutamine (glutamine finger) in trans to accelerate the GTP hydrolysis rate of the substrate GTPase. The protein is GTPase-activating protein GYP1 (GYP1) of Saccharomyces cerevisiae (strain ATCC 204508 / S288c) (Baker's yeast).